We begin with the raw amino-acid sequence, 451 residues long: Nucleoprotein (451 aa).

Positions Met1–Ser57 are disordered. Over residues Asn9–Gly23 the composition is skewed to low complexity. Polar residues predominate over residues Lys46 to Ala55. An RNA-binding region spans residues Gln52 to Ser193. Positions Pro60–Gly189 constitute a CoV N NTD domain. RNA-binding residues include Arg105, Arg121, and Arg163. Disordered regions lie at residues Lys155–Pro227, Lys266–Pro288, and Ala379–Glu423. Ser166 carries the post-translational modification Phosphoserine; by host. Thr173 bears the Phosphothreonine; by host mark. Residues Gly189–Pro208 are compositionally biased toward low complexity. Ser190 is subject to Phosphoserine; by host. Positions Arg211–Pro221 are enriched in polar residues. The 124-residue stretch at Ala256 to Ala379 folds into the CoV N CTD domain. A dimerization region spans residues Ile263–Gly380. A phosphoserine; by host mark is found at Ser386 and Ser421. The residue at position 425 (Thr425) is a Phosphothreonine; by host.

The protein belongs to the betacoronavirus nucleocapsid protein family. In terms of assembly, homooligomer. Both monomeric and oligomeric forms interact with RNA. Interacts with protein M. Interacts with NSP3; this interaction serves to tether the genome to the newly translated replicase-transcriptase complex at a very early stage of infection. In terms of processing, ADP-ribosylated. The ADP-ribosylation is retained in the virion during infection. Phosphorylated on serine and threonine residues.

It is found in the virion. The protein resides in the host endoplasmic reticulum-Golgi intermediate compartment. It localises to the host Golgi apparatus. Its function is as follows. Packages the positive strand viral genome RNA into a helical ribonucleocapsid (RNP) and plays a fundamental role during virion assembly through its interactions with the viral genome and membrane protein M. Plays an important role in enhancing the efficiency of subgenomic viral RNA transcription as well as viral replication. The chain is Nucleoprotein from Murine coronavirus (strain 2) (MHV-2).